Reading from the N-terminus, the 210-residue chain is Cytidylate kinase (210 aa).

ATP is bound at residue 7-15 (GPAASGKGT).

The protein belongs to the cytidylate kinase family. Type 1 subfamily.

The protein localises to the cytoplasm. It carries out the reaction CMP + ATP = CDP + ADP. The enzyme catalyses dCMP + ATP = dCDP + ADP. The polypeptide is Cytidylate kinase (Methylobacterium sp. (strain 4-46)).